The sequence spans 589 residues: ATP-dependent lipid A-core flippase (589 aa).

The next 5 membrane-spanning stretches (helical) occupy residues 29-49, 70-90, 157-177, 261-281, and 283-303; these read LLLV…TGFL, WLPV…YITD, VIGA…TILV, MIGA…ALAG, and LTAG…PGLK. Positions 32–314 constitute an ABC transmembrane type-1 domain; it reads VAALIAALIE…LTNVQNMVQR (283 aa). An ABC transporter domain is found at 346–582; it reads IEFRDVTARY…GGLYSHLHGM (237 aa). 380-387 provides a ligand contact to ATP; that stretch reads GRSGSGKS.

This sequence belongs to the ABC transporter superfamily. Lipid exporter (TC 3.A.1.106) family. In terms of assembly, homodimer.

It localises to the cell inner membrane. The enzyme catalyses ATP + H2O + lipid A-core oligosaccharideSide 1 = ADP + phosphate + lipid A-core oligosaccharideSide 2.. Functionally, involved in lipopolysaccharide (LPS) biosynthesis. Translocates lipid A-core from the inner to the outer leaflet of the inner membrane. Transmembrane domains (TMD) form a pore in the inner membrane and the ATP-binding domain (NBD) is responsible for energy generation. The polypeptide is ATP-dependent lipid A-core flippase (Xanthomonas oryzae pv. oryzae (strain MAFF 311018)).